A 477-amino-acid polypeptide reads, in one-letter code: MHLLILLPALCVLGAHSAPLSYTYLQHRIQEKPQKDHGRLQFNSLHYPHIKGLLNAHGSWNPPRCGVPDIPAPPDSSSGRNRQKRFVLSGGRWDKTNLTYKIIRFPWQLSKVKVRRTIAEALKVWSEVTPLTFTEVHEGRSDIIIDFTRYWHGDNLPFDGPGGILAHAFFPKTHREGDVHFDYDEAWTIGNNIGTDLLQVAAHEFGHMLGLQHSSISKSLMSPFYTFRYPLSLSADDKHGIQFLYGAPRPPTPSPTPRVEVNQVENESNEIPAAEPDACKTNFDAVSTIRGELFFFKSGYVWRLRGGKLQNGYPALASRHWRGIPDTVDAAFEDSVGNIWFFYGSQFWVFDGKLQASGPFPITDIGISVTQIQAAFVWGTEKNKKTYLFRGGEYWRFNPETRRVESRHSRRIGDWRGVPKGIDAAFQDEQGYAYFVKGRQYWKFDPFKVRVMDGYPHLISQDFFNCQASSTFVNSLR.

The N-terminal stretch at 1–17 (MHLLILLPALCVLGAHS) is a signal peptide. Residues 18-85 (APLSYTYLQH…SSSGRNRQKR (68 aa)) constitute a propeptide, activation peptide. The segment at 64 to 83 (RCGVPDIPAPPDSSSGRNRQ) is disordered. Residues Cys-65, His-152, and Asp-154 each coordinate Zn(2+). Asp-159, Gly-160, Gly-162, and Ile-164 together coordinate Ca(2+). Residues His-167, His-180, and His-203 each contribute to the Zn(2+) site. Glu-204 is an active-site residue. The Zn(2+) site is built by His-207 and His-213. Cysteines 279 and 466 form a disulfide. Hemopexin repeat units lie at residues 280–324 (KTNF…WRGI), 325–369 (PDTV…GISV), 370–418 (TQIQ…WRGV), and 419–466 (PKGI…FFNC).

It belongs to the peptidase M10A family. It depends on Ca(2+) as a cofactor. Requires Zn(2+) as cofactor. Expressed in fibroblast cells that are activated by thyroid hormone. High levels in resorbing tail.

The protein localises to the secreted. The protein resides in the extracellular space. Its subcellular location is the extracellular matrix. In terms of biological role, may be involved in the modification of the extracellular matrix during metamorphic apoptosis. The chain is Stromelysin-3 (mmp11) from Xenopus laevis (African clawed frog).